Here is a 230-residue protein sequence, read N- to C-terminus: CRP-like protein Clp (230 aa).

P18–V139 is an a nucleoside 3',5'-cyclic phosphate binding site. The HTH crp-type domain maps to L158–R230. The H-T-H motif DNA-binding region spans R190–K209.

In terms of assembly, homodimer.

It localises to the cytoplasm. With respect to regulation, allosterically inhibited by cyclic di-GMP (c-di-GMP), which binds to Clp and abolishes its ability to bind its target gene promoter. Its function is as follows. Global transcriptional regulator that regulates virulence factors production by activating or repressing the expression of a large set of genes in diffusible signal factor (DSF) pathway. In Xanthomonas axonopodis pv. citri (strain 306), this protein is CRP-like protein Clp (clp).